Reading from the N-terminus, the 197-residue chain is dITP/XTP pyrophosphatase (197 aa).

8–13 (TKNKGK) provides a ligand contact to substrate. 2 residues coordinate Mg(2+): Glu42 and Asp71. Asp71 serves as the catalytic Proton acceptor. Substrate contacts are provided by residues Ser72, 154-157 (FGYD), Lys177, and 182-183 (HR).

Belongs to the HAM1 NTPase family. As to quaternary structure, homodimer. Requires Mg(2+) as cofactor.

The enzyme catalyses XTP + H2O = XMP + diphosphate + H(+). The catalysed reaction is dITP + H2O = dIMP + diphosphate + H(+). It carries out the reaction ITP + H2O = IMP + diphosphate + H(+). Pyrophosphatase that catalyzes the hydrolysis of nucleoside triphosphates to their monophosphate derivatives, with a high preference for the non-canonical purine nucleotides XTP (xanthosine triphosphate), dITP (deoxyinosine triphosphate) and ITP. Seems to function as a house-cleaning enzyme that removes non-canonical purine nucleotides from the nucleotide pool, thus preventing their incorporation into DNA/RNA and avoiding chromosomal lesions. In Oceanobacillus iheyensis (strain DSM 14371 / CIP 107618 / JCM 11309 / KCTC 3954 / HTE831), this protein is dITP/XTP pyrophosphatase.